Here is a 113-residue protein sequence, read N- to C-terminus: Cell division protein FtsB (113 aa).

The Cytoplasmic portion of the chain corresponds to 1–3 (MRL). A helical membrane pass occupies residues 4-21 (ISLLLFVLLLAIQYPLWL). At 22-113 (GKGGWLRVWE…PNSPAATGRH (92 aa)) the chain is on the periplasmic side. The stretch at 34 to 63 (HQVQEQATRNQMLKLRNAKLEGEVKDLQDG) forms a coiled coil. The interval 93–113 (KVSATPPLPPPPNSPAATGRH) is disordered.

It belongs to the FtsB family. In terms of assembly, part of a complex composed of FtsB, FtsL and FtsQ.

The protein resides in the cell inner membrane. Functionally, essential cell division protein. May link together the upstream cell division proteins, which are predominantly cytoplasmic, with the downstream cell division proteins, which are predominantly periplasmic. This chain is Cell division protein FtsB, found in Cupriavidus pinatubonensis (strain JMP 134 / LMG 1197) (Cupriavidus necator (strain JMP 134)).